Here is an 86-residue protein sequence, read N- to C-terminus: U15-lycotoxin-Ls1a (86 aa).

An N-terminal signal peptide occupies residues 1-20; it reads MNSKIFAVLFLLAFLSCVLS. Residues 21 to 66 form the WAP domain; sequence DQYCPKSSITACKKMNIRNDCCKDDDCTGGSWCCATPCGNFCKYPT. 5 cysteine pairs are disulfide-bonded: Cys24–Cys54, Cys32–Cys58, Cys41–Cys53, Cys42–Cys80, and Cys47–Cys62.

Belongs to the venom protein 11 family. 01 (wap-1) subfamily. Post-translationally, contains 5 disulfide bonds. In terms of tissue distribution, expressed by the venom gland.

It is found in the secreted. Has antibacterial activity. The polypeptide is U15-lycotoxin-Ls1a (Lycosa singoriensis (Wolf spider)).